A 534-amino-acid chain; its full sequence is Calcium-dependent protein kinase 29 (534 aa).

The segment at 1–72 (MGFCFSKFGK…STSSGSQIGP (72 aa)) is disordered. The N-myristoyl glycine moiety is linked to residue glycine 2. Low complexity predominate over residues 16-27 (IPISSSSDSSPP). Positions 49 to 63 (NPQPKPKPAPPPPPS) are enriched in pro residues. One can recognise a Protein kinase domain in the interval 85 to 343 (YDLHKELGRG…AAEALEHPWM (259 aa)). Residues 91–99 (LGRGQFGIT) and lysine 114 contribute to the ATP site. Aspartate 209 serves as the catalytic Proton acceptor. Serine 249 is subject to Phosphoserine. Residues 348 to 378 (ISDKPINSAVLVRMKQFRAMNKLKKLALKVI) are autoinhibitory domain. EF-hand domains follow at residues 385–420 (EEIK…LGSK), 421–456 (LTES…RHRL), 457–492 (EKEE…YGMG), and 493–527 (DDAT…GTTD). Residues aspartate 398, aspartate 400, serine 402, threonine 404, glutamate 409, aspartate 434, aspartate 436, serine 438, threonine 440, glutamate 445, aspartate 470, aspartate 472, serine 474, glutamate 481, aspartate 505, aspartate 507, aspartate 509, arginine 511, and glutamate 516 each coordinate Ca(2+).

Belongs to the protein kinase superfamily. Ser/Thr protein kinase family. CDPK subfamily.

The protein localises to the membrane. The catalysed reaction is L-seryl-[protein] + ATP = O-phospho-L-seryl-[protein] + ADP + H(+). It catalyses the reaction L-threonyl-[protein] + ATP = O-phospho-L-threonyl-[protein] + ADP + H(+). Activated by calcium. Autophosphorylation may play an important role in the regulation of the kinase activity. May play a role in signal transduction pathways that involve calcium as a second messenger. This Arabidopsis thaliana (Mouse-ear cress) protein is Calcium-dependent protein kinase 29 (CPK29).